Here is a 344-residue protein sequence, read N- to C-terminus: Dihydroorotase (344 aa).

Histidine 13 and histidine 15 together coordinate Zn(2+). Substrate-binding positions include 15 to 17 (HLR) and asparagine 41. Zn(2+)-binding residues include lysine 99, histidine 136, and histidine 174. At lysine 99 the chain carries N6-carboxylysine. Residue histidine 136 coordinates substrate. Residue leucine 219 participates in substrate binding. A Zn(2+)-binding site is contributed by aspartate 247. Aspartate 247 is a catalytic residue. Residues histidine 251 and alanine 263 each contribute to the substrate site.

Belongs to the metallo-dependent hydrolases superfamily. DHOase family. Class II DHOase subfamily. In terms of assembly, homodimer. Zn(2+) is required as a cofactor.

The enzyme catalyses (S)-dihydroorotate + H2O = N-carbamoyl-L-aspartate + H(+). Its pathway is pyrimidine metabolism; UMP biosynthesis via de novo pathway; (S)-dihydroorotate from bicarbonate: step 3/3. In terms of biological role, catalyzes the reversible cyclization of carbamoyl aspartate to dihydroorotate. The polypeptide is Dihydroorotase (Acinetobacter baylyi (strain ATCC 33305 / BD413 / ADP1)).